Consider the following 251-residue polypeptide: Ditrans,polycis-undecaprenyl-diphosphate synthase ((2E,6E)-farnesyl-diphosphate specific) (251 aa).

D19 is an active-site residue. Residue D19 coordinates Mg(2+). Substrate contacts are provided by residues 20–23, W24, H36, and 64–66; these read GNNR and SSE. The active-site Proton acceptor is the N67. Residues W68, R70, R187, and 193–195 each bind substrate; that span reads RIS. A Mg(2+)-binding site is contributed by E206.

It belongs to the UPP synthase family. In terms of assembly, homodimer. It depends on Mg(2+) as a cofactor.

The enzyme catalyses 8 isopentenyl diphosphate + (2E,6E)-farnesyl diphosphate = di-trans,octa-cis-undecaprenyl diphosphate + 8 diphosphate. Its function is as follows. Catalyzes the sequential condensation of isopentenyl diphosphate (IPP) with (2E,6E)-farnesyl diphosphate (E,E-FPP) to yield (2Z,6Z,10Z,14Z,18Z,22Z,26Z,30Z,34E,38E)-undecaprenyl diphosphate (di-trans,octa-cis-UPP). UPP is the precursor of glycosyl carrier lipid in the biosynthesis of bacterial cell wall polysaccharide components such as peptidoglycan and lipopolysaccharide. This chain is Ditrans,polycis-undecaprenyl-diphosphate synthase ((2E,6E)-farnesyl-diphosphate specific), found in Pseudomonas aeruginosa (strain ATCC 15692 / DSM 22644 / CIP 104116 / JCM 14847 / LMG 12228 / 1C / PRS 101 / PAO1).